A 474-amino-acid chain; its full sequence is PRAME family member 14 (474 aa).

LRR repeat units follow at residues 15-38 (QSLL…LYLP), 204-229 (LNSI…CYLK), 271-294 (LLKI…LQNP), 319-342 (LGYL…PLGA), and 391-414 (MGAL…TYPA).

It belongs to the PRAME family.

This Homo sapiens (Human) protein is PRAME family member 14.